We begin with the raw amino-acid sequence, 264 residues long: COP9 signalosome complex subunit 7b (264 aa).

At Ala2 the chain carries N-acetylalanine. The region spanning 2 to 159 (AGEQKPSSNL…QLLEVDFCIG (158 aa)) is the PCI domain. Residues 194–237 (RANQYKENHSRTQQQVEAEVTNIKKTLKATASSSAQEMEQQLAE) are a coiled coil. Over residues 223-232 (TASSSAQEME) the composition is skewed to polar residues. Positions 223–264 (TASSSAQEMEQQLAERECPPHAEQRQPTKKMSKVKGLVSSRH) are disordered. The segment covering 235-248 (LAERECPPHAEQRQ) has biased composition (basic and acidic residues).

It belongs to the CSN7/EIF3M family. CSN7 subfamily. Component of the CSN complex, composed of COPS1/GPS1, COPS2, COPS3, COPS4, COPS5, COPS6, COPS7 (COPS7A or COPS7B), COPS8 and COPS9. In the complex, it probably interacts directly with COPS1, COPS2, COPS4, COPS5, COPS6 and COPS8. Interacts with EIF3S6.

The protein localises to the cytoplasm. It is found in the nucleus. Functionally, component of the COP9 signalosome complex (CSN), a complex involved in various cellular and developmental processes. The CSN complex is an essential regulator of the ubiquitin (Ubl) conjugation pathway by mediating the deneddylation of the cullin subunits of SCF-type E3 ligase complexes, leading to decrease the Ubl ligase activity of SCF-type complexes such as SCF, CSA or DDB2. The complex is also involved in phosphorylation of p53/TP53, JUN, I-kappa-B-alpha/NFKBIA, ITPK1 and IRF8/ICSBP, possibly via its association with CK2 and PKD kinases. CSN-dependent phosphorylation of TP53 and JUN promotes and protects degradation by the Ubl system, respectively. The protein is COP9 signalosome complex subunit 7b (COPS7B) of Bos taurus (Bovine).